Reading from the N-terminus, the 167-residue chain is MLKSAKLYIPSIAAIILSSNIAMAXNNYDTGHATPLRQVADLIDNQITNIDNLFKNRLPLYESNSIKSNFITKDKQYIIIMEVPGFDKSQIKIKVNGNKLFITRNIEEKNKADDSDNYMNKNFNYVISLYEDVDQANISSSLKNGILTIILPRIEIKEQDAREITIN.

The 109-residue stretch at 59–167 (PLYESNSIKS…EQDAREITIN (109 aa)) folds into the sHSP domain.

Belongs to the small heat shock protein (HSP20) family.

The sequence is that of Small heat shock protein C1 (hspC1) from Rickettsia felis (strain ATCC VR-1525 / URRWXCal2) (Rickettsia azadi).